The primary structure comprises 345 residues: Homeobox-leucine zipper protein HOX16 (345 aa).

Positions 76–135 form a DNA-binding region, homeobox; the sequence is LPEKKRRLTPEQVHLLERSFEEENKLEPERKTELARKLGLQPRQVAVWFQNRRARWKTKQ. Residues 134–178 form a leucine-zipper region; sequence KQLERDFDRLKASFDALRADHDALLQDNHRLHSQVMSLTEKLQEK. The tract at residues 220-241 is disordered; that stretch reads FEEQQEQQVKAEDRLSTGSGGS.

The protein belongs to the HD-ZIP homeobox family. Class I subfamily. Expressed in seedlings, stems, leaf sheaths and blades and panicles.

The protein resides in the nucleus. Its function is as follows. Probable transcription factor. The chain is Homeobox-leucine zipper protein HOX16 (HOX16) from Oryza sativa subsp. indica (Rice).